The following is a 946-amino-acid chain: C-1-tetrahydrofolate synthase, cytoplasmic (946 aa).

The tract at residues 2-319 (AGQVLDGKAC…PPLPLKLLTP (318 aa)) is methylenetetrahydrofolate dehydrogenase and cyclohydrolase. Residues 51–55 (YVRMK) and 98–100 (VQL) each bind substrate. NADP(+) is bound at residue 169-171 (GRS). A Phosphoserine modification is found at Ser176. Ser194 contacts NADP(+). 277–281 (PGGVG) provides a ligand contact to substrate. Phosphothreonine is present on Thr318. Positions 320 to 946 (VPSDIDISRA…DDDGEIDGLF (627 aa)) are formyltetrahydrofolate synthetase. Ser322 is subject to Phosphoserine. ATP is bound at residue 384–391 (TPLGEGKS).

In the N-terminal section; belongs to the tetrahydrofolate dehydrogenase/cyclohydrolase family. It in the C-terminal section; belongs to the formate--tetrahydrofolate ligase family. In terms of assembly, homodimer.

The protein localises to the cytoplasm. Its subcellular location is the nucleus. It carries out the reaction (6R)-5,10-methylene-5,6,7,8-tetrahydrofolate + NADP(+) = (6R)-5,10-methenyltetrahydrofolate + NADPH. The enzyme catalyses (6R)-5,10-methenyltetrahydrofolate + H2O = (6R)-10-formyltetrahydrofolate + H(+). It catalyses the reaction (6S)-5,6,7,8-tetrahydrofolate + formate + ATP = (6R)-10-formyltetrahydrofolate + ADP + phosphate. It participates in one-carbon metabolism; tetrahydrofolate interconversion. Its function is as follows. Cytoplasmic isozyme of C-1-tetrahydrofolate synthase. The trifunctional enzyme catalyzes the interconversion of the one-carbon derivatives of tetrahydrofolate (THF) between different oxidation states by the enzymatic activities 10-formyltetrahydrofolate synthetase, 5,lO-methenyltetrahydrofolate cyclohydrolase, and 5,lO-methylenetetrahydrofolate dehydrogenase. Involved in the generation of one-carbon intermediates in the biosynthesis of the purine bases. This chain is C-1-tetrahydrofolate synthase, cytoplasmic (ADE3), found in Saccharomyces cerevisiae (strain ATCC 204508 / S288c) (Baker's yeast).